We begin with the raw amino-acid sequence, 275 residues long: Dihydroxyacetone phosphatase (275 aa).

Asp10 functions as the Nucleophile in the catalytic mechanism. Positions 10, 12, and 206 each coordinate Mg(2+). Asp12 (proton donor/acceptor) is an active-site residue.

It belongs to the HAD-like hydrolase superfamily. In terms of assembly, homohexamer. It depends on Mg(2+) as a cofactor.

It carries out the reaction dihydroxyacetone phosphate + H2O = dihydroxyacetone + phosphate. In terms of biological role, catalyzes dephosphorylation of dihydroxyacetone phosphate (DHAP) to produce 1,3-dihydroxyacetone (DHA). Is the main enzyme responsible for DHA production from catabolism of sugars (glucose, fructose, and sucrose) in C.glutamicum. Displays no activity toward nucleoside monophosphates (AMP, CMP, GMP, or UMP). This Corynebacterium glutamicum (strain R) protein is Dihydroxyacetone phosphatase.